Here is a 272-residue protein sequence, read N- to C-terminus: tRNA (guanine-N(7)-)-methyltransferase (272 aa).

The segment covering Met1–Arg20 has biased composition (basic and acidic residues). Residues Met1–Tyr43 form a disordered region. S-adenosyl-L-methionine contacts are provided by residues Gly89, Glu112–Ile113, Asn148–Ala149, and Cys168. Residue Asp171 is part of the active site. An S-adenosyl-L-methionine-binding site is contributed by Thr246–Glu248.

It belongs to the class I-like SAM-binding methyltransferase superfamily. TrmB family. In terms of assembly, forms a complex with TRM82.

It is found in the nucleus. It carries out the reaction guanosine(46) in tRNA + S-adenosyl-L-methionine = N(7)-methylguanosine(46) in tRNA + S-adenosyl-L-homocysteine. It functions in the pathway tRNA modification; N(7)-methylguanine-tRNA biosynthesis. In terms of biological role, catalyzes the formation of N(7)-methylguanine at position 46 (m7G46) in tRNA. In Meyerozyma guilliermondii (strain ATCC 6260 / CBS 566 / DSM 6381 / JCM 1539 / NBRC 10279 / NRRL Y-324) (Yeast), this protein is tRNA (guanine-N(7)-)-methyltransferase.